Here is a 585-residue protein sequence, read N- to C-terminus: BURP domain-containing protein 17 (585 aa).

The first 20 residues, 1-20, serve as a signal peptide directing secretion; that stretch reads MDRIFARFFCFLLIAAVSHA. A disordered region spans residues 63-82; it reads GQRNYKSSVSHVAERSHRVD. In terms of domain architecture, BURP spans 363–584; it reads FFLEKNLQQG…QPDAVVWTRR (222 aa).

As to expression, expressed in leaves.

The protein is BURP domain-containing protein 17 (BURP17) of Oryza sativa subsp. japonica (Rice).